The primary structure comprises 521 residues: 4-cresol dehydrogenase [hydroxylating] flavoprotein subunit (521 aa).

Positions 54 to 268 constitute an FAD-binding PCMH-type domain; sequence AAHAPSAAVT…VEIVDALRPL (215 aa). Tyr384 carries the O-8alpha-FAD tyrosine modification.

As to quaternary structure, tetramer of two cytochrome subunits and two flavoprotein subunits. It depends on FAD as a cofactor.

It carries out the reaction 4-methylphenol + 4 oxidized [azurin] + H2O = 4 reduced [azurin] + 4-hydroxybenzaldehyde + 4 H(+). It functions in the pathway aromatic compound metabolism; p-cresol degradation. Functionally, catalyzes the azurin dependent hydroxylation of the methyl group of 4-methylphenol to form 4-hydroxybenzaldehyde. This Pseudomonas putida (Arthrobacter siderocapsulatus) protein is 4-cresol dehydrogenase [hydroxylating] flavoprotein subunit (pchF).